Here is a 214-residue protein sequence, read N- to C-terminus: Ras-related protein Rab-11A (214 aa).

GTP is bound by residues Gly20 to Asn28, Ser39 to Thr45, Asp68 to Gln72, Asn126 to Asp129, and Ser156 to Leu158. The Effector region motif lies at Thr42–Phe50. S-geranylgeranyl cysteine attachment occurs at residues Cys213 and Cys214.

It belongs to the small GTPase superfamily. Rab family.

It localises to the contractile vacuole membrane. Required for normal contractile vacuole structure and function. Cells expressing a dominant negative rab11A exhibit a more extensive contractile vacuole network and enlarged contractile vacuole bladders. These cells exhibit a functional defect in osmotic regulation where cells immersed in water become rounded and detach from the surface, and contain swollen contractile vacuoles. The sequence is that of Ras-related protein Rab-11A (rab11A) from Dictyostelium discoideum (Social amoeba).